Reading from the N-terminus, the 344-residue chain is Uroporphyrinogen decarboxylase (344 aa).

Residues 26–30 (RQAGR), Asp-76, Tyr-151, Ser-206, and His-321 each bind substrate.

Belongs to the uroporphyrinogen decarboxylase family. Homodimer.

Its subcellular location is the cytoplasm. It catalyses the reaction uroporphyrinogen III + 4 H(+) = coproporphyrinogen III + 4 CO2. Its pathway is porphyrin-containing compound metabolism; protoporphyrin-IX biosynthesis; coproporphyrinogen-III from 5-aminolevulinate: step 4/4. Functionally, catalyzes the decarboxylation of four acetate groups of uroporphyrinogen-III to yield coproporphyrinogen-III. This is Uroporphyrinogen decarboxylase from Sinorhizobium fredii (strain NBRC 101917 / NGR234).